The chain runs to 269 residues: tRNA pseudouridine synthase A (269 aa).

The active-site Nucleophile is Asp-51. Tyr-109 serves as a coordination point for substrate.

It belongs to the tRNA pseudouridine synthase TruA family. As to quaternary structure, homodimer.

The enzyme catalyses uridine(38/39/40) in tRNA = pseudouridine(38/39/40) in tRNA. In terms of biological role, formation of pseudouridine at positions 38, 39 and 40 in the anticodon stem and loop of transfer RNAs. This chain is tRNA pseudouridine synthase A, found in Aeromonas hydrophila subsp. hydrophila (strain ATCC 7966 / DSM 30187 / BCRC 13018 / CCUG 14551 / JCM 1027 / KCTC 2358 / NCIMB 9240 / NCTC 8049).